The chain runs to 1631 residues: ALK tyrosine kinase receptor (1631 aa).

A signal peptide spans 1-18 (MGSVGLLGLLLLRLSVTA). Topologically, residues 19–1053 (SGSGAGTGSG…PHLPLSLVLS (1035 aa)) are extracellular. The interval 20–53 (GSGAGTGSGTGSGTGTGTGQLVGSPATGPALQPR) is disordered. Over residues 21 to 39 (SGAGTGSGTGSGTGTGTGQ) the composition is skewed to gly residues. The heparin-binding region stretch occupies residues 60–82 (RLQRKSLAVDFVVPSLFRVYARD). 10 N-linked (GlcNAc...) asparagine glycosylation sites follow: asparagine 185, asparagine 260, asparagine 301, asparagine 340, asparagine 427, asparagine 440, asparagine 461, asparagine 579, asparagine 587, and asparagine 643. The MAM 1 domain maps to 280-443 (LECSFDFPCE…DFFALKNCSE (164 aa)). Positions 494-652 (FYCNFENGFC…NISISLDCYL (159 aa)) constitute an MAM 2 domain. Residues cysteine 703 and cysteine 716 are joined by a disulfide bond. Asparagine 724 carries N-linked (GlcNAc...) asparagine glycosylation. Cysteine 798 and cysteine 809 are oxidised to a cystine. N-linked (GlcNAc...) asparagine glycosylation is found at asparagine 823, asparagine 878, asparagine 879, and asparagine 901. Cysteine 921 and cysteine 943 are disulfide-bonded. Asparagine 1001 carries an N-linked (GlcNAc...) asparagine glycan. Cystine bridges form between cysteine 1002/cysteine 1010, cysteine 1005/cysteine 1021, and cysteine 1023/cysteine 1036. The EGF-like stretch occupies residues 1002–1040 (CSHCEGDECHMDPESHKVICFCDHGTVLAEDGVSCIVSP). Residues 1054–1074 (VVTSALVAALVLAFSGIMIVY) traverse the membrane as a helical segment. Over 1075-1631 (RRKHQELQAM…DALLKTPPGP (557 aa)) the chain is Cytoplasmic. The Protein kinase domain maps to 1131–1407 (ITLIRGLGHG…IEYCTQDPDV (277 aa)). ATP contacts are provided by residues 1137-1145 (LGHGAFGEV) and lysine 1165. Aspartate 1264 acts as the Proton acceptor in catalysis. Disordered regions lie at residues 1423-1493 (EEKV…GHVN), 1526-1554 (WFTEKPTKKNNPPATKGHHDRGNLGREGS), and 1609-1631 (FEGTTAPGSSQYEDALLKTPPGP).

In terms of assembly, homodimer; homodimerizes following heparin- and ligand-binding. Interacts with CBL, IRS1, PIK3R1 and PLCG1. Interacts with FRS2 and SHC1. Interacts with PTN and MDK. Phosphorylated at tyrosine residues by autocatalysis, which activates kinase activity. In cells not stimulated by a ligand, receptor protein tyrosine phosphatase beta and zeta complex (PTPRB/PTPRZ1) dephosphorylates ALK at the sites in ALK that are undergoing autophosphorylation through autoactivation.

The protein localises to the cell membrane. The catalysed reaction is L-tyrosyl-[protein] + ATP = O-phospho-L-tyrosyl-[protein] + ADP + H(+). With respect to regulation, activated upon ALKAL2 ligand-binding. ALKAL2-driven activation is coupled with heparin-binding. Following ligand-binding, homodimerizes and autophosphorylates, activating its kinase activity. Inactivated through dephosphorylation by receptor protein tyrosine phosphatase beta and zeta complex (PTPRB/PTPRZ1) when there is no stimulation by a ligand. Functionally, neuronal receptor tyrosine kinase that is essentially and transiently expressed in specific regions of the central and peripheral nervous systems and plays an important role in the genesis and differentiation of the nervous system. Also acts as a key thinness protein involved in the resistance to weight gain: in hypothalamic neurons, controls energy expenditure acting as a negative regulator of white adipose tissue lipolysis and sympathetic tone to fine-tune energy homeostasis. Following activation by ALKAL2 ligand at the cell surface, transduces an extracellular signal into an intracellular response. In contrast, ALKAL1 is not a potent physiological ligand for ALK. Ligand-binding to the extracellular domain induces tyrosine kinase activation, leading to activation of the mitogen-activated protein kinase (MAPK) pathway. Phosphorylates almost exclusively at the first tyrosine of the Y-x-x-x-Y-Y motif. Induces tyrosine phosphorylation of CBL, FRS2, IRS1 and SHC1, as well as of the MAP kinases MAPK1/ERK2 and MAPK3/ERK1. ALK activation may also be regulated by pleiotrophin (PTN) and midkine (MDK). PTN-binding induces MAPK pathway activation, which is important for the anti-apoptotic signaling of PTN and regulation of cell proliferation. MDK-binding induces phosphorylation of the ALK target insulin receptor substrate (IRS1), activates mitogen-activated protein kinases (MAPKs) and PI3-kinase, resulting also in cell proliferation induction. Drives NF-kappa-B activation, probably through IRS1 and the activation of the AKT serine/threonine kinase. Recruitment of IRS1 to activated ALK and the activation of NF-kappa-B are essential for the autocrine growth and survival signaling of MDK. The chain is ALK tyrosine kinase receptor from Canis lupus familiaris (Dog).